The chain runs to 547 residues: Sodium-coupled neutral amino acid transporter 4 (547 aa).

Residues 1–26 (MDPMELRNVNIEPDDESSSGESVPDS) are disordered. Residues 1–104 (MDPMELRNVN…GLSYAMANTG (104 aa)) are Extracellular-facing. At Ser49 the chain carries Phosphoserine. A helical transmembrane segment spans residues 105–125 (IILFIIMLLAVAILSLYSVHL). Residues 126–151 (LLKTAKEGGSLIYEKLGEKAFGWPGK) are Cytoplasmic-facing. The chain crosses the membrane as a helical span at residues 152–172 (IGAFISITMQNIGAMSSYLFI). At 173-195 (IKYELPEVIRAFMGLEENTGEWY) the chain is on the extracellular side. Residues 196–216 (PNGNYLIVFVSLGIILPLSLL) form a helical membrane-spanning segment. The Cytoplasmic segment spans residues 217–220 (KNLG). The helical transmembrane segment at 221–241 (YLGYTSGFSLTCMVFFVSVVI) threads the bilayer. The Extracellular segment spans residues 242–332 (YKKFQIPCPL…PKYFVFNSRT (91 aa)). Cys249 and Cys321 are oxidised to a cystine. 3 N-linked (GlcNAc...) asparagine glycosylation sites follow: Asn260, Asn264, and Asn276. The chain crosses the membrane as a helical span at residues 333–353 (AYAIPILAFAFVCHPEVLPIY). Residues 354–369 (SELKDRSRRKMQTVSN) are Cytoplasmic-facing. The chain crosses the membrane as a helical span at residues 370–390 (ISITGMLVMYLLAALFGYLTF). The Extracellular portion of the chain corresponds to 391–411 (YGEVEDELLHAYSKVYTFDIP). Residues 412 to 432 (LLMVRLAVLVAVTLTVPIVLF) form a helical membrane-spanning segment. Residues 433 to 453 (PIRTSVTTLLFPKRPFSWIRH) lie on the Cytoplasmic side of the membrane. A helical membrane pass occupies residues 454–474 (FLIAAVLIALNNVLVILVPTI). The Extracellular segment spans residues 475-476 (KY). The helical transmembrane segment at 477-497 (IFGFIGASSATMLIFILPAVF) threads the bilayer. The Cytoplasmic segment spans residues 498 to 514 (YLKLVKKESFRSPQKVG). The helical transmembrane segment at 515–535 (ALIFLVVGIIFMIGSMALIII) threads the bilayer. Residues 536–547 (DWIYDPPNSKHH) are Extracellular-facing.

This sequence belongs to the amino acid/polyamine transporter 2 family. In terms of processing, the disulfide bond plays an important role in substrate transport, but has no effect on trafficking to the cell surface.

The protein localises to the cell membrane. It is found in the cell projection. The protein resides in the microvillus membrane. It carries out the reaction L-methionine(in) + Na(+)(in) = L-methionine(out) + Na(+)(out). The catalysed reaction is L-asparagine(in) + Na(+)(in) = L-asparagine(out) + Na(+)(out). It catalyses the reaction L-threonine(in) + Na(+)(in) = L-threonine(out) + Na(+)(out). The enzyme catalyses L-serine(in) + Na(+)(in) = L-serine(out) + Na(+)(out). It carries out the reaction glycine(in) + Na(+)(in) = glycine(out) + Na(+)(out). The catalysed reaction is L-alanine(in) + Na(+)(in) = L-alanine(out) + Na(+)(out). It catalyses the reaction L-glutamine(in) + Na(+)(in) = L-glutamine(out) + Na(+)(out). The enzyme catalyses L-histidine(in) + Na(+)(in) = L-histidine(out) + Na(+)(out). It carries out the reaction L-cysteine(in) + Na(+)(in) = L-cysteine(out) + Na(+)(out). The catalysed reaction is L-proline(in) + Na(+)(in) = L-proline(out) + Na(+)(out). Functionally, symporter that cotransports neutral amino acids and sodium ions from the extraccellular to the intracellular side of the cell membrane. The transport is electrogenic, pH dependent and partially tolerates substitution of Na(+) by Li(+). Preferentially transports smaller amino acids, such as glycine, L-alanine, L-serine, L-asparagine and L-threonine, followed by L-cysteine, L-histidine, L-proline and L-glutamine and L-methionine. The protein is Sodium-coupled neutral amino acid transporter 4 of Pongo abelii (Sumatran orangutan).